The following is a 205-amino-acid chain: Ribonuclease HII (205 aa).

Residues 14-205 enclose the RNase H type-2 domain; that stretch reads SLISGIDEAG…SFRLKQLGEK (192 aa). Asp-20, Glu-21, and Asp-117 together coordinate a divalent metal cation.

The protein belongs to the RNase HII family. The cofactor is Mn(2+). Mg(2+) is required as a cofactor.

It is found in the cytoplasm. It carries out the reaction Endonucleolytic cleavage to 5'-phosphomonoester.. In terms of biological role, endonuclease that specifically degrades the RNA of RNA-DNA hybrids. The polypeptide is Ribonuclease HII (Chlorobium phaeobacteroides (strain DSM 266 / SMG 266 / 2430)).